We begin with the raw amino-acid sequence, 62 residues long: Potassium channel toxin alpha-KTx Tx790 (62 aa).

The first 18 residues, 1–18 (MQKLFIVLVLFCILRLDA), serve as a signal peptide directing secretion. 3 cysteine pairs are disulfide-bonded: Cys-28–Cys-46, Cys-33–Cys-59, and Cys-37–Cys-61.

Belongs to the short scorpion toxin superfamily. Potassium channel inhibitor family. Alpha-KTx 23 subfamily. As to expression, expressed by the venom gland.

The protein resides in the secreted. In terms of biological role, may block potassium channels. The polypeptide is Potassium channel toxin alpha-KTx Tx790 (Buthus israelis (Israeli scorpion)).